A 469-amino-acid polypeptide reads, in one-letter code: Ribulose bisphosphate carboxylase large chain (469 aa).

The residue at position 5 (lysine 5) is an N6,N6,N6-trimethyllysine. The substrate site is built by asparagine 114 and threonine 164. Lysine 166 serves as the catalytic Proton acceptor. Residue lysine 168 coordinates substrate. Mg(2+) is bound by residues lysine 192, aspartate 194, and glutamate 195. N6-carboxylysine is present on lysine 192. The Proton acceptor role is filled by histidine 285. The substrate site is built by arginine 286, histidine 318, and serine 370.

This sequence belongs to the RuBisCO large chain family. Type I subfamily. Heterohexadecamer of 8 large chains and 8 small chains; disulfide-linked. The disulfide link is formed within the large subunit homodimers. It depends on Mg(2+) as a cofactor. Post-translationally, the disulfide bond which can form in the large chain dimeric partners within the hexadecamer appears to be associated with oxidative stress and protein turnover.

Its subcellular location is the plastid. The protein resides in the chloroplast. The enzyme catalyses 2 (2R)-3-phosphoglycerate + 2 H(+) = D-ribulose 1,5-bisphosphate + CO2 + H2O. The catalysed reaction is D-ribulose 1,5-bisphosphate + O2 = 2-phosphoglycolate + (2R)-3-phosphoglycerate + 2 H(+). In terms of biological role, ruBisCO catalyzes two reactions: the carboxylation of D-ribulose 1,5-bisphosphate, the primary event in carbon dioxide fixation, as well as the oxidative fragmentation of the pentose substrate in the photorespiration process. Both reactions occur simultaneously and in competition at the same active site. In Fleroya rubrostipulata (Mitragyna rubrostipulata), this protein is Ribulose bisphosphate carboxylase large chain.